Reading from the N-terminus, the 258-residue chain is Pyridoxine 5'-phosphate synthase (258 aa).

N16 contacts 3-amino-2-oxopropyl phosphate. 18-19 provides a ligand contact to 1-deoxy-D-xylulose 5-phosphate; that stretch reads DH. R27 provides a ligand contact to 3-amino-2-oxopropyl phosphate. The Proton acceptor role is filled by H52. The 1-deoxy-D-xylulose 5-phosphate site is built by R54 and H59. The Proton acceptor role is filled by E79. T109 contacts 1-deoxy-D-xylulose 5-phosphate. H200 serves as the catalytic Proton donor. 3-amino-2-oxopropyl phosphate is bound by residues G201 and 222 to 223; that span reads GH.

The protein belongs to the PNP synthase family. As to quaternary structure, homooctamer; tetramer of dimers.

It localises to the cytoplasm. The enzyme catalyses 3-amino-2-oxopropyl phosphate + 1-deoxy-D-xylulose 5-phosphate = pyridoxine 5'-phosphate + phosphate + 2 H2O + H(+). It participates in cofactor biosynthesis; pyridoxine 5'-phosphate biosynthesis; pyridoxine 5'-phosphate from D-erythrose 4-phosphate: step 5/5. Functionally, catalyzes the complicated ring closure reaction between the two acyclic compounds 1-deoxy-D-xylulose-5-phosphate (DXP) and 3-amino-2-oxopropyl phosphate (1-amino-acetone-3-phosphate or AAP) to form pyridoxine 5'-phosphate (PNP) and inorganic phosphate. The chain is Pyridoxine 5'-phosphate synthase from Burkholderia lata (strain ATCC 17760 / DSM 23089 / LMG 22485 / NCIMB 9086 / R18194 / 383).